Consider the following 380-residue polypeptide: Cytochrome b (380 aa).

The next 4 helical transmembrane spans lie at phenylalanine 33–methionine 53, tryptophan 77–valine 98, tryptophan 113–leucine 133, and phenylalanine 178–leucine 198. 2 residues coordinate heme b: histidine 83 and histidine 97. Residues histidine 182 and histidine 196 each contribute to the heme b site. Position 201 (histidine 201) interacts with a ubiquinone. 4 consecutive transmembrane segments (helical) span residues isoleucine 226–phenylalanine 246, leucine 288–asparagine 308, isoleucine 320–glycine 340, and phenylalanine 347–phenylalanine 367.

The protein belongs to the cytochrome b family. The cytochrome bc1 complex contains 11 subunits: 3 respiratory subunits (MT-CYB, CYC1 and UQCRFS1), 2 core proteins (UQCRC1 and UQCRC2) and 6 low-molecular weight proteins (UQCRH/QCR6, UQCRB/QCR7, UQCRQ/QCR8, UQCR10/QCR9, UQCR11/QCR10 and a cleavage product of UQCRFS1). This cytochrome bc1 complex then forms a dimer. Requires heme b as cofactor.

It localises to the mitochondrion inner membrane. In terms of biological role, component of the ubiquinol-cytochrome c reductase complex (complex III or cytochrome b-c1 complex) that is part of the mitochondrial respiratory chain. The b-c1 complex mediates electron transfer from ubiquinol to cytochrome c. Contributes to the generation of a proton gradient across the mitochondrial membrane that is then used for ATP synthesis. This chain is Cytochrome b (MT-CYB), found in Calomys musculinus (Drylands vesper mouse).